Consider the following 196-residue polypeptide: Large ribosomal subunit protein eL15 (196 aa).

Residues 154-196 (PGHRGRSERGLTSAGVKGRGMRRRGKGTEKCRPSVRANANRAK) are disordered.

It belongs to the eukaryotic ribosomal protein eL15 family.

The chain is Large ribosomal subunit protein eL15 from Methanospirillum hungatei JF-1 (strain ATCC 27890 / DSM 864 / NBRC 100397 / JF-1).